The primary structure comprises 193 residues: uncharacterized protein (193 aa).

Residues 86–181 are a coiled coil; the sequence is TKQRELLEIL…QVEEVQAEVG (96 aa).

This is an uncharacterized protein from Streptococcus pyogenes serotype M6 (strain ATCC BAA-946 / MGAS10394).